A 357-amino-acid chain; its full sequence is CD4+ T-cell-stimulating antigen (357 aa).

An N-terminal signal peptide occupies residues 1 to 22 (MKKRTFALALSMIIASGVVLGA). Cysteine 23 is lipidated: N-palmitoyl cysteine. Residue cysteine 23 is the site of S-diacylglycerol cysteine attachment.

This sequence belongs to the BMP lipoprotein family.

The protein resides in the cell membrane. This is CD4+ T-cell-stimulating antigen (tcsA) from Listeria innocua serovar 6a (strain ATCC BAA-680 / CLIP 11262).